Here is a 912-residue protein sequence, read N- to C-terminus: Effector protein hopAE1 (912 aa).

Residues 1 to 13 (MMPSQITRSSHSS) are compositionally biased toward polar residues. The segment at 1 to 32 (MMPSQITRSSHSSLPEVAPASGDATGVSEQTP) is disordered.

It belongs to the HopW family.

The protein resides in the secreted. In Pseudomonas savastanoi pv. phaseolicola (strain 1448A / Race 6) (Pseudomonas syringae pv. phaseolicola (strain 1448A / Race 6)), this protein is Effector protein hopAE1 (hopAE1).